The chain runs to 467 residues: ATP-dependent protease ATPase subunit HslU (467 aa).

Residues Val-22 and 64–69 contribute to the ATP site; that span reads GVGKTE. A disordered region spans residues 149 to 192; sequence QTNNPLESLFGGAIPNFGQNNEDEEEPPTEEIKTKRSEIKRQLE. The segment covering 178-192 has biased composition (basic and acidic residues); sequence EEIKTKRSEIKRQLE. The ATP site is built by Asp-280, Glu-345, and Arg-417.

It belongs to the ClpX chaperone family. HslU subfamily. As to quaternary structure, a double ring-shaped homohexamer of HslV is capped on each side by a ring-shaped HslU homohexamer. The assembly of the HslU/HslV complex is dependent on binding of ATP.

The protein localises to the cytoplasm. In terms of biological role, ATPase subunit of a proteasome-like degradation complex; this subunit has chaperone activity. The binding of ATP and its subsequent hydrolysis by HslU are essential for unfolding of protein substrates subsequently hydrolyzed by HslV. HslU recognizes the N-terminal part of its protein substrates and unfolds these before they are guided to HslV for hydrolysis. In Staphylococcus aureus (strain MW2), this protein is ATP-dependent protease ATPase subunit HslU.